An 85-amino-acid polypeptide reads, in one-letter code: Cell division topological specificity factor (85 aa).

This sequence belongs to the MinE family.

In terms of biological role, prevents the cell division inhibition by proteins MinC and MinD at internal division sites while permitting inhibition at polar sites. This ensures cell division at the proper site by restricting the formation of a division septum at the midpoint of the long axis of the cell. This is Cell division topological specificity factor from Chromobacterium violaceum (strain ATCC 12472 / DSM 30191 / JCM 1249 / CCUG 213 / NBRC 12614 / NCIMB 9131 / NCTC 9757 / MK).